The sequence spans 60 residues: Large ribosomal subunit protein bL32 (60 aa).

Residues 1-21 (MAVQQNKKSPSKRGMHRAHNA) form a disordered region. The span at 9–19 (SPSKRGMHRAH) shows a compositional bias: basic residues.

This sequence belongs to the bacterial ribosomal protein bL32 family.

The chain is Large ribosomal subunit protein bL32 from Albidiferax ferrireducens (strain ATCC BAA-621 / DSM 15236 / T118) (Rhodoferax ferrireducens).